The primary structure comprises 697 residues: Disintegrin and metalloproteinase domain-containing protein 26A (697 aa).

Residues 1–22 (MFLKFCLWTMFFFSAWSPIGHA) form the signal peptide. Residues 23–187 (KYSSLLEVVT…NAPTLLQIPY (165 aa)) constitute a propeptide that is removed on maturation. N127 carries an N-linked (GlcNAc...) asparagine glycan. The short motif at 159–166 (MRCGLSEE) is the Cysteine switch element. Residue C161 participates in Zn(2+) binding. Topologically, residues 188-671 (ENWWTHHRFI…PPLPLSHSKW (484 aa)) are extracellular. A Peptidase M12B domain is found at 195–385 (RFIEYFVVLD…TKRSCLYDIP (191 aa)). N214 is a glycosylation site (N-linked (GlcNAc...) asparagine). Disulfide bonds link C305–C380, C344–C366, and C346–C351. H329 is a binding site for Zn(2+). The active site involves E330. Residues H333 and H339 each coordinate Zn(2+). 6 N-linked (GlcNAc...) asparagine glycosylation sites follow: N365, N391, N464, N506, N531, and N573. Positions 392–478 (LTVCGNKVVE…ECPGDVYKAD (87 aa)) constitute a Disintegrin domain. A disulfide bond links C450 and C470. Positions 616-649 (LVSNCSPQLYHMQGICNNKQHCHCGVTWKPPDCQ) constitute an EGF-like domain. 2 disulfide bridges follow: C620-C631 and C639-C648. Residues 672–692 (IVYILIVLDVCIVIIIYLFSF) traverse the membrane as a helical segment. At 693–697 (YKLSK) the chain is on the cytoplasmic side.

Requires Zn(2+) as cofactor. As to expression, expressed in sperm (at protein level). Expressed specifically in testis.

The protein localises to the membrane. In terms of biological role, sperm surface membrane protein that may be involved in spermatogenesis and fertilization. This is Disintegrin and metalloproteinase domain-containing protein 26A from Mus musculus (Mouse).